We begin with the raw amino-acid sequence, 494 residues long: Solute carrier family 2, facilitated glucose transporter member 3 (494 aa).

The Cytoplasmic segment spans residues 1–10 (MGTTKVTTPL). The helical transmembrane segment at 11–32 (IFAISIATIGSFQFGYNTGVIN) threads the bilayer. Residues 33-64 (APEAIIKDFLNYTLEERSETPPSSVLLTSLWS) are Extracellular-facing. N-linked (GlcNAc...) asparagine glycosylation occurs at asparagine 43. A helical membrane pass occupies residues 65-85 (LSVAIFSVGGMIGSFSVGLFV). Residues 86–90 (NRFGR) lie on the Cytoplasmic side of the membrane. A helical transmembrane segment spans residues 91 to 111 (RNSMLIVNLLAIAGGCLMGFC). Residues 112-118 (KIAESVE) lie on the Extracellular side of the membrane. A helical transmembrane segment spans residues 119–142 (MLILGRLIIGLFCGLCTGFVPMYI). Residues 143–153 (GEISPTALRGA) lie on the Cytoplasmic side of the membrane. A helical transmembrane segment spans residues 154-174 (FGTLNQLGIVIGILVAQIFGL). Residue glutamine 159 participates in D-glucose binding. At 175-183 (KVILGTEDL) the chain is on the extracellular side. Residues 184–204 (WPLLLGFTILPAIIQCAALPF) form a helical membrane-spanning segment. The Cytoplasmic segment spans residues 205–269 (CPESPRFLLI…LFRAPNYRQP (65 aa)). Threonine 232 is modified (phosphothreonine). A helical transmembrane segment spans residues 270–290 (IIISIMLQLSQQLSGINAVFY). The segment at 277 to 279 (QLS) is important for selectivity against fructose. D-glucose contacts are provided by residues 280 to 281 (QQ) and asparagine 286. Residues 291–304 (YSTGIFKDAGVQEP) are Extracellular-facing. A helical membrane pass occupies residues 305–325 (VYATIGAGVVNTIFTVVSVFL). Asparagine 315 serves as a coordination point for D-glucose. The Cytoplasmic segment spans residues 326–331 (VERAGR). The chain crosses the membrane as a helical span at residues 332–352 (RTLHLIGLGGMAFCSILMTIS). The Extracellular segment spans residues 353–363 (LLLKDNYSWMS). A helical transmembrane segment spans residues 364–389 (FICIGAILVFVAFFEIGPGPIPWFIV). D-glucose contacts are provided by glutamate 378 and tryptophan 386. Over 390-399 (AELFGQGPRP) the chain is Cytoplasmic. Residues 400-420 (AAMAVAGCSNWTSNFLVGLLF) form a helical membrane-spanning segment. Residues 421-429 (PSATFYLGA) lie on the Extracellular side of the membrane. Residues 430 to 450 (YVFIVFTVFLVIFWVFTFFKV) traverse the membrane as a helical segment. Residues 451–494 (PETRGRTFEEITRAFEGQVQTGTRGEKGPIMEMNSIQPTKDTNA) are Cytoplasmic-facing. Residues 473-494 (TRGEKGPIMEMNSIQPTKDTNA) form a disordered region. A compositionally biased stretch (polar residues) spans 484–494 (NSIQPTKDTNA). Position 485 is a phosphoserine (serine 485). Threonine 492 carries the phosphothreonine modification.

It belongs to the major facilitator superfamily. Sugar transporter (TC 2.A.1.1) family. Glucose transporter subfamily. Interacts with SMIM43; the interaction may promote SLC2A3-mediated glucose transport to meet the energy needs of mesendoderm differentiation. In terms of tissue distribution, detected in placenta.

It localises to the cell membrane. The protein resides in the perikaryon. Its subcellular location is the cell projection. The enzyme catalyses D-glucose(out) = D-glucose(in). It carries out the reaction D-galactose(in) = D-galactose(out). Deoxyglucose transport is inhibited by D-glucose, D-galactose and maltose. Galactose transport is inhibited by D-glucose and maltose. Facilitative glucose transporter. Can also mediate the uptake of various other monosaccharides across the cell membrane. Mediates the uptake of glucose, 2-deoxyglucose, galactose, mannose, xylose and fucose, and probably also dehydroascorbate. Does not mediate fructose transport. Required for mesendoderm differentiation. The chain is Solute carrier family 2, facilitated glucose transporter member 3 from Ovis aries (Sheep).